The sequence spans 970 residues: Protein CLASP-3 (970 aa).

Disordered stretches follow at residues serine 314 to arginine 377 and asparagine 651 to histidine 675. Residues glycine 344 to asparagine 355 are compositionally biased toward polar residues. The stretch at isoleucine 905 to histidine 943 is one HEAT repeat.

The protein belongs to the CLASP family.

The protein localises to the cytoplasm. It localises to the cytoskeleton. Microtubule plus-end tracking protein that promotes the stabilization of dynamic microtubules. This chain is Protein CLASP-3 (cls-3), found in Caenorhabditis briggsae.